The following is a 175-amino-acid chain: Colicin-B immunity protein (175 aa).

Transmembrane regions (helical) follow at residues 14-32, 104-121, and 149-168; these read ILYA…ILIL, CFWG…TLFY, and IYFT…LLVI.

The protein resides in the cell inner membrane. Its function is as follows. This protein is able to protect a cell, which harbors the plasmid ColB encoding colicin B, against colicin B. In Escherichia coli, this protein is Colicin-B immunity protein (cbi).